Reading from the N-terminus, the 254-residue chain is 3-deoxy-manno-octulosonate cytidylyltransferase (254 aa).

It belongs to the KdsB family.

The protein localises to the cytoplasm. The catalysed reaction is 3-deoxy-alpha-D-manno-oct-2-ulosonate + CTP = CMP-3-deoxy-beta-D-manno-octulosonate + diphosphate. Its pathway is nucleotide-sugar biosynthesis; CMP-3-deoxy-D-manno-octulosonate biosynthesis; CMP-3-deoxy-D-manno-octulosonate from 3-deoxy-D-manno-octulosonate and CTP: step 1/1. The protein operates within bacterial outer membrane biogenesis; lipopolysaccharide biosynthesis. Functionally, activates KDO (a required 8-carbon sugar) for incorporation into bacterial lipopolysaccharide in Gram-negative bacteria. This Chlamydia caviae (strain ATCC VR-813 / DSM 19441 / 03DC25 / GPIC) (Chlamydophila caviae) protein is 3-deoxy-manno-octulosonate cytidylyltransferase.